A 390-amino-acid chain; its full sequence is Homeobox protein Meis1 (390 aa).

An MEIS N-terminal domain is found at 108-192 (GGDVCSSESF…IDLVIDDREG (85 aa)). Over residues 190-202 (REGGSKSDSEDVT) the composition is skewed to basic and acidic residues. The segment at 190–279 (REGGSKSDSE…KKRHKKRGIF (90 aa)) is disordered. The span at 203-213 (RSANLTDQPSW) shows a compositional bias: polar residues. Positions 272-334 (RHKKRGIFPK…NARRRIVQPM (63 aa)) form a DNA-binding region, homeobox; TALE-type. Residues 299 to 329 (YPSEEQKKQLAQDTGLTILQVNNWFINARRR) form an interaction with DNA region. The required for transcriptional activation stretch occupies residues 335 to 390 (IDQSNRAVSQGTPYNPDGQPMGGFVMDGQQHMGIRAPGPMSGMGMNMGMEGQWHYM).

This sequence belongs to the TALE/MEIS homeobox family. As to quaternary structure, interacts with the N-terminal region of PBX1 to form a heterodimer which binds DNA including a cAMP-responsive sequence in CYP17. Also forms heterodimers with PBX2. Forms heterotrimers with PBX1 or PBX2 and a number of HOX proteins including HOXA9, HOXD4 and HOXD9 where it acts as a non-DNA-binding partner. Also forms heterotrimers with PBX1 and HOX proteins including HOXD9 and HOXD10 where PBX1 is the non-DNA-binding partner. Heterodimer with DLX3. Heterodimer with HOXB13. As to expression, expressed at high levels in the lung with lower levels detected in the heart and brain. Expressed in pancreatic islets (beta-cells and non-beta-cells).

The protein resides in the nucleus. Acts as a transcriptional regulator of PAX6. Also acts as a transcriptional activator of PF4 in complex with PBX1 or PBX2. Required for hematopoiesis, megakaryocyte lineage development and vascular patterning. May function as a cofactor for HOXA7 and HOXA9 in the induction of myeloid leukemias. The chain is Homeobox protein Meis1 (Meis1) from Mus musculus (Mouse).